Consider the following 281-residue polypeptide: 4-deoxy-L-threo-5-hexosulose-uronate ketol-isomerase (281 aa).

4 residues coordinate Zn(2+): His198, His200, Glu205, and His248.

It belongs to the KduI family. Zn(2+) is required as a cofactor.

The catalysed reaction is 5-dehydro-4-deoxy-D-glucuronate = 3-deoxy-D-glycero-2,5-hexodiulosonate. The protein operates within glycan metabolism; pectin degradation; 2-dehydro-3-deoxy-D-gluconate from pectin: step 4/5. Catalyzes the isomerization of 5-dehydro-4-deoxy-D-glucuronate to 3-deoxy-D-glycero-2,5-hexodiulosonate. This Levilactobacillus brevis (strain ATCC 367 / BCRC 12310 / CIP 105137 / JCM 1170 / LMG 11437 / NCIMB 947 / NCTC 947) (Lactobacillus brevis) protein is 4-deoxy-L-threo-5-hexosulose-uronate ketol-isomerase.